Consider the following 378-residue polypeptide: Glutamate 5-kinase (378 aa).

K19 is an ATP binding site. 3 residues coordinate substrate: S59, D146, and N158. Residues T178–D179 and T220–K226 contribute to the ATP site. Residues Q285–K363 enclose the PUA domain.

It belongs to the glutamate 5-kinase family.

It localises to the cytoplasm. It catalyses the reaction L-glutamate + ATP = L-glutamyl 5-phosphate + ADP. It participates in amino-acid biosynthesis; L-proline biosynthesis; L-glutamate 5-semialdehyde from L-glutamate: step 1/2. Its function is as follows. Catalyzes the transfer of a phosphate group to glutamate to form L-glutamate 5-phosphate. The protein is Glutamate 5-kinase of Moorella thermoacetica (strain ATCC 39073 / JCM 9320).